A 335-amino-acid polypeptide reads, in one-letter code: MAIYTRTGDAGTTALFTGQRVSKTHPRVEAYGTLDELNAALSLCVCAAKNPQHRQLLENIQLQLFWFSAELASESEQPAPEQRYISSEEIAALEAAIDTAMGRVPPLRSFILPGRSEAASRLHFARTLARRAERRLVELSTEISVRHVLMRYINRLSDCLYALARAEDHDAHQNNIIQKVAERYLAAIRTSATREPAMSLSFQELHQLTRAAVMRAEELQVPVVISIVDANGTQTVTWRMPDALLVSSELAPKKAWTAVAMKTATHELTSAVQPGAALYGLESHMQGKVVTFGGGYALWREGLLLGGLGISGGSVEQDMDIAETAIAAINVRTHQ.

His-206 contributes to the heme binding site.

The protein belongs to the Cob(I)alamin adenosyltransferase family. PduO subfamily. As to quaternary structure, forms a complex with PduS. The cofactor is heme b. It depends on Mg(2+) as a cofactor.

It localises to the bacterial microcompartment. It carries out the reaction cob(I)alamin-[corrinoid adenosyltransferase] + ATP = apo-[corrinoid adenosyltransferase] + adenosylcob(III)alamin + triphosphate. It participates in polyol metabolism; 1,2-propanediol degradation. The protein operates within cofactor biosynthesis; adenosylcobalamin biosynthesis. Functionally, converts cob(I)alamin to adenosylcobalamin (adenosylcob(III)alamin), the cofactor for propanediol dehydratase. Found in the bacterial microcompartment (BMC) dedicated to 1,2-propanediol (1,2-PD) degradation. PduS and PduO allow regeneration of the adenosylcobalamin cofactor within the BMC. In terms of biological role, expression of a cosmid containing the full 21-gene pdu operon in E.coli allows E.coli to grow on 1,2-propanediol (1,2-PD) with the appearance of bacterial microcompartments (BMC) in its cytoplasm. The 1,2-PD-specific bacterial microcompartment (BMC) concentrates low levels of 1,2-PD catabolic enzymes, concentrates volatile reaction intermediates thus enhancing pathway flux and keeps the level of toxic, mutagenic propionaldehyde low. The polypeptide is Corrinoid adenosyltransferase PduO (Citrobacter freundii).